Here is a 550-residue protein sequence, read N- to C-terminus: Arginine--tRNA ligase (550 aa).

Residues 130-140 carry the 'HIGH' region motif; sequence ANPTGPIHLGG.

It belongs to the class-I aminoacyl-tRNA synthetase family. Monomer.

The protein resides in the cytoplasm. It catalyses the reaction tRNA(Arg) + L-arginine + ATP = L-arginyl-tRNA(Arg) + AMP + diphosphate. This chain is Arginine--tRNA ligase, found in Corynebacterium diphtheriae (strain ATCC 700971 / NCTC 13129 / Biotype gravis).